The chain runs to 834 residues: Mannosyl-oligosaccharide glucosidase (834 aa).

Residues 1–10 (MARGERRRRA) are compositionally biased toward basic residues. The disordered stretch occupies residues 1–37 (MARGERRRRAAAAEGARPLERARAAGRRDGRAGGARG). At 1 to 43 (MARGERRRRAAAAEGARPLERARAAGRRDGRAGGARGSASGAA) the chain is on the cytoplasmic side. Residues 3-9 (RGERRRR) carry the Endoplasmic reticulum targeting motif. The segment covering 17 to 31 (RPLERARAAGRRDGR) has biased composition (basic and acidic residues). The chain crosses the membrane as a helical; Signal-anchor for type II membrane protein span at residues 44 to 64 (LAVVVLALAFGLSGRWVLAWL). Residues 65–834 (RVRRALTLHP…LVLLIMAEEY (770 aa)) are Lumenal-facing. The segment at 74-136 (PAPSALPPDS…GTPPKLRHTC (63 aa)) is required for endoplasmic reticulum targeting. The active-site Proton donor is the aspartate 580. A glycan (N-linked (GlcNAc...) asparagine) is linked at asparagine 654. The Proton acceptor role is filled by glutamate 804.

It belongs to the glycosyl hydrolase 63 family.

The protein localises to the endoplasmic reticulum membrane. It carries out the reaction N(4)-(alpha-D-Glc-(1-&gt;2)-alpha-D-Glc-(1-&gt;3)-alpha-D-Glc-(1-&gt;3)-alpha-D-Man-(1-&gt;2)-alpha-D-Man-(1-&gt;2)-alpha-D-Man-(1-&gt;3)-[alpha-D-Man-(1-&gt;2)-alpha-D-Man-(1-&gt;3)-[alpha-D-Man-(1-&gt;2)-alpha-D-Man-(1-&gt;6)]-alpha-D-Man-(1-&gt;6)]-beta-D-Man-(1-&gt;4)-beta-D-GlcNAc-(1-&gt;4)-beta-D-GlcNAc)-L-asparaginyl-[protein] + H2O = N(4)-(alpha-D-Glc-(1-&gt;3)-alpha-D-Glc-(1-&gt;3)-alpha-D-Man-(1-&gt;2)-alpha-D-Man-(1-&gt;2)-alpha-D-Man-(1-&gt;3)-[alpha-D-Man-(1-&gt;2)-alpha-D-Man-(1-&gt;3)-[alpha-D-Man-(1-&gt;2)-alpha-D-Man-(1-&gt;6)]-alpha-D-Man-(1-&gt;6)]-beta-D-Man-(1-&gt;4)-beta-D-GlcNAc-(1-&gt;4)-beta-D-GlcNAc)-L-asparaginyl-[protein] + beta-D-glucose. It functions in the pathway glycan metabolism; N-glycan degradation. Its activity is regulated as follows. Inhibited by the deoxynojirimycin derivative N-9'-Methoxynonyl-1-Deoxynojirimycin. Functionally, in the context of N-glycan degradation, cleaves the distal alpha 1,2-linked glucose residue from the Glc(3)Man(9)GlcNAc(2) oligosaccharide precursor in a highly specific manner. In terms of biological role, (Microbial infection) Required for successful influenza or dengue virus infection; inhibition of its activity by a deoxynojirimycin derivative prevents death in mice infected with lethal doses of influenza or dengue viruses, even when administrated after infection. This Mus musculus (Mouse) protein is Mannosyl-oligosaccharide glucosidase.